An 88-amino-acid polypeptide reads, in one-letter code: MLKLICIAFLVTVLTLVAGQDSLDPAEFGCADDVNQAELLKNNDICLQCEDLHKEGVVFSLCKTNCFTTEYFQHCVKDLEEAKKEPPE.

Residues methionine 1–glycine 19 form the signal peptide. Glutamine 20 bears the Pyrrolidone carboxylic acid mark. 3 disulfides stabilise this stretch: cysteine 30/cysteine 66, cysteine 46/cysteine 62, and cysteine 49/cysteine 75.

This sequence belongs to the arthropod CHH/MIH/GIH/VIH hormone family. The N-terminus is blocked. As to expression, expressed by the venom gland.

It localises to the secreted. May increase the toxicity of alpha-latrotoxin and/or other venom components. Is non-toxic to mice and to the cockroach Periplaneta americana. The sequence is that of Alpha-latrotoxin-associated low molecular weight protein-2 from Latrodectus tredecimguttatus (Mediterranean black widow spider).